Here is a 143-residue protein sequence, read N- to C-terminus: Ribonuclease P protein component (143 aa).

Residues 111–143 (RVKRKGGGPGGNRRSAPPGSAPLTDDGRLRGEP) are disordered.

Belongs to the RnpA family. In terms of assembly, consists of a catalytic RNA component (M1 or rnpB) and a protein subunit.

The catalysed reaction is Endonucleolytic cleavage of RNA, removing 5'-extranucleotides from tRNA precursor.. Functionally, RNaseP catalyzes the removal of the 5'-leader sequence from pre-tRNA to produce the mature 5'-terminus. It can also cleave other RNA substrates such as 4.5S RNA. The protein component plays an auxiliary but essential role in vivo by binding to the 5'-leader sequence and broadening the substrate specificity of the ribozyme. The sequence is that of Ribonuclease P protein component from Deinococcus geothermalis (strain DSM 11300 / CIP 105573 / AG-3a).